Consider the following 558-residue polypeptide: Urocanate hydratase (558 aa).

NAD(+) is bound by residues 54-55 (GG), Gln132, 178-180 (GMG), Glu198, 244-245 (NA), 265-269 (QTSAH), 275-276 (YL), and Tyr324. The active site involves Cys412. Gly494 serves as a coordination point for NAD(+).

This sequence belongs to the urocanase family. NAD(+) is required as a cofactor.

Its subcellular location is the cytoplasm. It catalyses the reaction 4-imidazolone-5-propanoate = trans-urocanate + H2O. It functions in the pathway amino-acid degradation; L-histidine degradation into L-glutamate; N-formimidoyl-L-glutamate from L-histidine: step 2/3. Functionally, catalyzes the conversion of urocanate to 4-imidazolone-5-propionate. This chain is Urocanate hydratase, found in Acinetobacter baumannii (strain ACICU).